Reading from the N-terminus, the 66-residue chain is Small ribosomal subunit protein bS21 (66 aa).

This sequence belongs to the bacterial ribosomal protein bS21 family.

The sequence is that of Small ribosomal subunit protein bS21 from Rickettsia peacockii (strain Rustic).